The chain runs to 162 residues: MSGLTHFDAAGHAHMVDVGGKQETQRIAIARGTIRMLPATFALIRDGKAKKGDVLGVARIAAIQGAKRTADLIPLCHPLALTRVAVDFELDDALPGVHCVVQVETFGRTGVEMEALTAVQVGLLTVYDMCKAVDRGMVITDVSVREKRGGKSGDWKAEDVAG.

Residues 75–77 (LCH) and 113–114 (ME) each bind substrate. The active site involves aspartate 128.

It belongs to the MoaC family. In terms of assembly, homohexamer; trimer of dimers.

It carries out the reaction (8S)-3',8-cyclo-7,8-dihydroguanosine 5'-triphosphate = cyclic pyranopterin phosphate + diphosphate. It participates in cofactor biosynthesis; molybdopterin biosynthesis. Its function is as follows. Catalyzes the conversion of (8S)-3',8-cyclo-7,8-dihydroguanosine 5'-triphosphate to cyclic pyranopterin monophosphate (cPMP). This Burkholderia cenocepacia (strain ATCC BAA-245 / DSM 16553 / LMG 16656 / NCTC 13227 / J2315 / CF5610) (Burkholderia cepacia (strain J2315)) protein is Cyclic pyranopterin monophosphate synthase.